Reading from the N-terminus, the 195-residue chain is E3 ubiquitin-protein ligase ZNRF1 (195 aa).

Over residues 1 to 10 the composition is skewed to polar residues; it reads MGGKQSSASR. 2 disordered regions span residues 1 to 36 and 61 to 84; these read MGGK…HFRA and PFGL…DSRG. G2 carries N-myristoyl glycine lipidation. A compositionally biased stretch (low complexity) spans 18–29; it reads VSSDDSAVPPSS. The RING-type; atypical zinc-finger motif lies at 152–193; that stretch reads CVICLEELSQGDTIARLPCLCIYHKSCIDSWFEVNRCCPEHP.

The protein resides in the endosome. The protein localises to the lysosome. It is found in the membrane. The catalysed reaction is S-ubiquitinyl-[E2 ubiquitin-conjugating enzyme]-L-cysteine + [acceptor protein]-L-lysine = [E2 ubiquitin-conjugating enzyme]-L-cysteine + N(6)-ubiquitinyl-[acceptor protein]-L-lysine.. Its pathway is protein modification; protein ubiquitination. In terms of biological role, E3 ubiquitin-protein ligase that plays a role in neuron cells differentiation. Plays a role in the establishment and maintenance of neuronal transmission and plasticity. This chain is E3 ubiquitin-protein ligase ZNRF1 (znrf1), found in Xenopus tropicalis (Western clawed frog).